A 345-amino-acid chain; its full sequence is Quinolinate synthase (345 aa).

Iminosuccinate is bound by residues His-69 and Ser-87. [4Fe-4S] cluster is bound at residue Cys-132. Iminosuccinate-binding positions include 158–160 and Ser-175; that span reads YVN. [4Fe-4S] cluster is bound at residue Cys-217. Residues 243–245 and Thr-260 each bind iminosuccinate; that span reads HPE. Cys-303 is a [4Fe-4S] cluster binding site.

Belongs to the quinolinate synthase family. Type 2 subfamily. It depends on [4Fe-4S] cluster as a cofactor.

Its subcellular location is the cytoplasm. The enzyme catalyses iminosuccinate + dihydroxyacetone phosphate = quinolinate + phosphate + 2 H2O + H(+). It participates in cofactor biosynthesis; NAD(+) biosynthesis; quinolinate from iminoaspartate: step 1/1. Functionally, catalyzes the condensation of iminoaspartate with dihydroxyacetone phosphate to form quinolinate. The sequence is that of Quinolinate synthase from Agrobacterium fabrum (strain C58 / ATCC 33970) (Agrobacterium tumefaciens (strain C58)).